Consider the following 451-residue polypeptide: MNKKILFLGVGGIGVSALAIAAKRLGAHVAGYDSAANKLTAKLEALGIVIFTSPSGVDVANFDIVVYSSAILSSHPLLSQARSLGIQCLQRAMFLAVLMKDFSYSLAITGTHGKTTTSSVLATLLCQLDKHSSFVVGGVVKYADSNIQVNGTDKLVIEADESDASFLFLSPQVVIITNIDLDHMATYNNSYQTLLENFTDFVSKESVKSIYLCVDDQGCRDLLAKYNQSDKNVTSYGFSINADVQIYDYHIIDEITHFKIRYKGDDLSFKLQLPGKYNVQNATACIIACLDLGFKYEDIRNALIKVTGVARRFDLYTKVISGHQVTVIDDYGHHPVEVANSISAVRDRYPNKKIIHVFQPHRYTRNRDLIKDWPKALSLADQLILLPTYSAGEQIIKGAESQDIAKGLSGYLLADGFDHAIYFLEKLANENTVILIQGAGDVTNLVEMLSE.

ATP is bound at residue 110–116 (GTHGKTT).

It belongs to the MurCDEF family.

It is found in the cytoplasm. The enzyme catalyses UDP-N-acetyl-alpha-D-muramate + L-alanine + ATP = UDP-N-acetyl-alpha-D-muramoyl-L-alanine + ADP + phosphate + H(+). It functions in the pathway cell wall biogenesis; peptidoglycan biosynthesis. Functionally, cell wall formation. The sequence is that of UDP-N-acetylmuramate--L-alanine ligase from Francisella tularensis subsp. novicida (strain U112).